We begin with the raw amino-acid sequence, 313 residues long: MSRNGRNDYDYDDDYDNDQMGGRLARDRERDSEGYLYTKTGERNRRSGPEARERNRENALNRSRNDGRFAPERGGRGYGDDDVKYTKSGRVNGRTTREARERNSRTARSEERDELGRFIGKRGSSRATRGTYTEGANDAAQLLLGGKQGVAENPETDERHSDAFRMEHRRLAEERERDEFGRFLPTEDGEDGRRGRRSNSRRRSSNARSTSSRSSGSRSSGSRSSGSRSSGSRSTGSKTSSRSSGSKTSRSSGSSRSRSGSSGSKSGRSRNSRSGTSGRSSNSRSGSRSGSSSRSSNSRSGSRSSSRSGSSRR.

Residues 1–313 (MSRNGRNDYD…SSSRSGSSRR (313 aa)) are disordered. Basic and acidic residues-rich tracts occupy residues 24-33 (LARDRERDSE), 40-85 (TGER…DVKY), 95-116 (TTREARERNSRTARSEERDELG), and 156-181 (TDERHSDAFRMEHRRLAEERERDEFG). Positions 194–205 (RGRRSNSRRRSS) are enriched in basic residues. 2 stretches are compositionally biased toward low complexity: residues 206–266 (NARS…GSKS) and 272–313 (SRSG…SSRR).

Its subcellular location is the virion. This is an uncharacterized protein from Acanthamoeba polyphaga mimivirus (APMV).